Reading from the N-terminus, the 445-residue chain is MVEDKSQVKVKFFTREQDESLHVLDAPLFAPVSLKRYGLSEIINHLLGLAEPVPFDFLIDGQLLRCSLQDYLTRKGLSSEAVLNVEYTRAVLPPSYLKSFSNEDWVSALDVGAERIVSGSYDGVVRTWNLSGKIEKQYSGHTGAVRAVKFISSTRLVSGGNDRTLRLWKTKNDDVKHVDELEGTEEAHTLAILEGHQAPVVSVDVQGDRILSASYDNSIGFWSTNHKDMTAVDPMDSLGDKASSAAKKRRKLTMKDGSVRRRAPLSLLESHKAPVEQVIFASNDSTVAYSVSQDHTIKTWDLVTSRCVDTKSTSYSLLSMVELPKLRLLACGSSARHITLHDPRADSSAKITQQQLLGHKNFVVALDTCPENEYMLCSASHDGTVKVWDIRSSSSIYTITREDQSVEKGINDKVFAVKWAKGVGIISGGQDKKIQFNKGDNIFKN.

Positions 8-89 (VKVKFFTREQ…EAVLNVEYTR (82 aa)) are ubiquitin-like (UBL) domain. The interval 99–445 (SFSNEDWVSA…FNKGDNIFKN (347 aa)) is sufficient for interaction with ERB1 and association with 66S pre-ribosomes. WD repeat units lie at residues 101-138 (SNED…EKQY), 140-178 (GHTG…VKHV), 195-232 (GHQA…MTAV), 270-310 (SHKA…CVDT), 312-351 (STSY…SAKI), 358-398 (GHKN…SIYT), and 409-445 (GIND…IFKN).

The protein belongs to the WD repeat WDR12/YTM1 family. As to quaternary structure, component of the NOP7 complex, composed of ERB1, NOP7 and YTM1. The complex is held together by ERB1, which interacts with NOP7 via its N-terminal domain and with YTM1 via a high-affinity interaction between the seven-bladed beta-propeller domains of the 2 proteins. The NOP7 complex associates with the 66S pre-ribosome. Interacts (via UBL domain) with MDN1 (via VWFA/MIDAS domain).

It is found in the nucleus. The protein resides in the nucleolus. The protein localises to the nucleoplasm. Functionally, component of the NOP7 complex, which is required for maturation of the 25S and 5.8S ribosomal RNAs and formation of the 60S ribosome. The polypeptide is Ribosome biogenesis protein YTM1 (Eremothecium gossypii (strain ATCC 10895 / CBS 109.51 / FGSC 9923 / NRRL Y-1056) (Yeast)).